An 856-amino-acid chain; its full sequence is DNA mismatch repair protein MutS (856 aa).

618-625 (GPNMGGKS) is an ATP binding site.

It belongs to the DNA mismatch repair MutS family.

Functionally, this protein is involved in the repair of mismatches in DNA. It is possible that it carries out the mismatch recognition step. This protein has a weak ATPase activity. This is DNA mismatch repair protein MutS from Shewanella baltica (strain OS195).